The chain runs to 104 residues: uncharacterized protein (104 aa).

This is an uncharacterized protein from Saccharomyces cerevisiae (strain ATCC 204508 / S288c) (Baker's yeast).